Reading from the N-terminus, the 162-residue chain is MSRLLVDDPCRAAWRLPIALRDISGVFAAMQCATGLEGFEVELTIADDALIAMINEEQLGCIGPTNILSFPAYGAPPDYPADGMECGTGQDAHTSLPLLGSLVLSVDTLRREAFLYGQPVQEHCLRLLAHGLGHIAGYDHGAEMEAFEEAAREAALATRTAR.

Positions 130, 134, and 140 each coordinate Zn(2+).

The protein belongs to the endoribonuclease YbeY family. Requires Zn(2+) as cofactor.

The protein localises to the cytoplasm. Functionally, single strand-specific metallo-endoribonuclease involved in late-stage 70S ribosome quality control and in maturation of the 3' terminus of the 16S rRNA. The chain is Endoribonuclease YbeY from Nitratidesulfovibrio vulgaris (strain ATCC 29579 / DSM 644 / CCUG 34227 / NCIMB 8303 / VKM B-1760 / Hildenborough) (Desulfovibrio vulgaris).